A 556-amino-acid polypeptide reads, in one-letter code: MRRLVYCKVVLATSLMWVLVDVFLLLYFSECNKCDDKKERSLLPALRAVISRNQEGPGEMGKAVLIPKDDQEKMKELFKINQFNLMASDLIALNRSLPDVRLEGCKTKVYPDELPNTSVVIVFHNEAWSTLLRTVYSVINRSPHYLLSEVILVDDASERDFLKLTLENYVKTLEVPVKIIRMEERSGLIRARLRGAAASKGQVITFLDAHCECTLGWLEPLLARIKEDRKTVVCPIIDVISDDTFEYMAGSDMTYGGFNWKLNFRWYPVPQREMDRRKGDRTLPVRTPTMAGGLFSIDRNYFEEIGTYDAGMDIWGGENLEMSFRIWQCGGSLEIVTCSHVGHVFRKATPYTFPGGTGHVINKNNRRLAEVWMDEFKDFFYIISPGVVKVDYGDVSVRKTLRENLKCKPFSWYLENIYPDSQIPRRYYSLGEIRNVETNQCLDNMGRKENEKVGIFNCHGMGGNQVFSYTADKEIRTDDLCLDVSRLSGPVIMLKCHHMRGNQLWEYDAERLTLRHANSNQCLDEPSEEDKMVPTMQDCSGSRSQQWLLRNMTLGT.

At Met1–Leu4 the chain is on the cytoplasmic side. A helical; Signal-anchor for type II membrane protein membrane pass occupies residues Val5–Tyr27. Residues Phe28–Thr556 are Lumenal-facing. Asn94 and Asn116 each carry an N-linked (GlcNAc...) asparagine glycan. Intrachain disulfides connect Cys105–Cys338, Cys329–Cys407, Cys441–Cys458, Cys481–Cys496, and Cys522–Cys539. Positions Leu114–Arg224 are catalytic subdomain A. Residues Asp155 and Arg185 each coordinate substrate. 2 residues coordinate Mn(2+): Asp208 and His210. The catalytic subdomain B stretch occupies residues Pro284–Arg346. Substrate is bound at residue Trp315. His343 lines the Mn(2+) pocket. Positions 346 and 351 each coordinate substrate. In terms of domain architecture, Ricin B-type lectin spans Tyr428–Arg550. A glycan (N-linked (GlcNAc...) asparagine) is linked at Asn551.

It belongs to the glycosyltransferase 2 family. GalNAc-T subfamily. Mn(2+) serves as cofactor.

It is found in the golgi apparatus membrane. The enzyme catalyses L-seryl-[protein] + UDP-N-acetyl-alpha-D-galactosamine = a 3-O-[N-acetyl-alpha-D-galactosaminyl]-L-seryl-[protein] + UDP + H(+). It catalyses the reaction L-threonyl-[protein] + UDP-N-acetyl-alpha-D-galactosamine = a 3-O-[N-acetyl-alpha-D-galactosaminyl]-L-threonyl-[protein] + UDP + H(+). The protein operates within protein modification; protein glycosylation. In terms of biological role, catalyzes the initial reaction in O-linked oligosaccharide biosynthesis, the transfer of an N-acetyl-D-galactosamine (GalNAc) residue from UDP-GalNAc to a serine or threonine residue on the protein receptor. Generates GalNAc-O-Ser/Thr structure also known as Tn antigen, which itself is immunogenic but also serves as a precursor for the synthesis of different mucin-type O-glycan core structures. Contributes to the synthesis of O-linked glycans on mucins and proteoglycans of the central nervous system. Can glycosylate both unmodified peptides and glycopeptides that already contain an O-linked GalNAc sugar. Transfers GalNAc to Thr-/Ser-rich tandem repeats GTTPSPVPTTSTTSAP of MUC5AC. Transfers GalNAc to three consecutive serine/threonine residues on SDC3 forming a triplet-Tn epitope expressed in Purkinje cells of the developing brain. May promote neurogenesis through glycosylation and stabilization of PDPN. The chain is Polypeptide N-acetylgalactosaminyltransferase 13 (Galnt13) from Rattus norvegicus (Rat).